The following is a 379-amino-acid chain: Homoserine O-acetyltransferase (379 aa).

The AB hydrolase-1 domain maps to 52–356 (NVVVVLHALT…VYGHDGFLVE (305 aa)). Residue serine 157 is the Nucleophile of the active site. Substrate is bound at residue arginine 227. Active-site residues include aspartate 320 and histidine 350. Aspartate 351 is a substrate binding site.

Belongs to the AB hydrolase superfamily. MetX family. In terms of assembly, homodimer.

The protein resides in the cytoplasm. It catalyses the reaction L-homoserine + acetyl-CoA = O-acetyl-L-homoserine + CoA. Its pathway is amino-acid biosynthesis; L-methionine biosynthesis via de novo pathway; O-acetyl-L-homoserine from L-homoserine: step 1/1. Transfers an acetyl group from acetyl-CoA to L-homoserine, forming acetyl-L-homoserine. In Mycobacterium bovis (strain ATCC BAA-935 / AF2122/97), this protein is Homoserine O-acetyltransferase.